Reading from the N-terminus, the 1091-residue chain is Self-sufficient cytochrome P450 monooxygenase CYP505E1 (1091 aa).

Heme is bound at residue cysteine 433. The 142-residue stretch at 528–669 (ICFFYGSNSG…DLEAWEETSL (142 aa)) folds into the Flavodoxin-like domain. FMN is bound by residues 534-538 (SNSGT) and 613-645 (VFGCGHHDWTQTFYRIPTLIDELMHKAGATRLA). Residues 707 to 935 (KDLMEARVTT…RPAKEAFHLP (229 aa)) enclose the FAD-binding FR-type domain.

It in the N-terminal section; belongs to the cytochrome P450 family. The cofactor is FAD. FMN serves as cofactor. It depends on heme as a cofactor.

It carries out the reaction 2 oxidized [cytochrome P450] + NADPH = 2 reduced [cytochrome P450] + NADP(+) + H(+). It catalyses the reaction an organic molecule + reduced [NADPH--hemoprotein reductase] + O2 = an alcohol + oxidized [NADPH--hemoprotein reductase] + H2O + H(+). The catalysed reaction is dodecanoate + reduced [NADPH--hemoprotein reductase] + O2 = 5-hydroxydodecanoate + oxidized [NADPH--hemoprotein reductase] + H2O + H(+). The enzyme catalyses tetradecanoate + reduced [NADPH--hemoprotein reductase] + O2 = 7-hydroxytetradecanoate + oxidized [NADPH--hemoprotein reductase] + H2O + H(+). It carries out the reaction dodecan-1-ol + reduced [NADPH--hemoprotein reductase] + O2 = 1,5-dodecanediol + oxidized [NADPH--hemoprotein reductase] + H2O + H(+). It catalyses the reaction dodecan-1-ol + reduced [NADPH--hemoprotein reductase] + O2 = 1,4-dodecanediol + oxidized [NADPH--hemoprotein reductase] + H2O + H(+). The catalysed reaction is dodecan-1-ol + reduced [NADPH--hemoprotein reductase] + O2 = 1,6-dodecanediol + oxidized [NADPH--hemoprotein reductase] + H2O + H(+). In terms of biological role, self-sufficient cytochrome P450 monooxygenase that catalyzes the regioselective in-chain hydroxylation of alkanes, fatty alcohols, and fatty acids at the omega-7 position. Performs hydroxylation of C10-C16 n-alkanes and C12 and C14 fatty alcohols; and thereby enables the one step biocatalytic synthesis of rare alcohols such as 5-dodecanol and 7-tetradecanol. Converts 1-dodecanol into 1,5-dodecanediol as major product with very little sub-terminally hydroxylated products with the 1,4-dodecanediol and 1,6-dodecanediol more abundant. Converts dodecanoic acid to 5-hydroxydodecanoic acid which can be further converted into delta-dodecalactone by lactonization of the 5-hydroxy acid at low pH. Also gives sub-terminal hydroxylation of dodecanoic acid with 9-hydroxydodecanoic acid being the second most abundant product. This is Self-sufficient cytochrome P450 monooxygenase CYP505E1 from Aspergillus niger (strain ATCC MYA-4892 / CBS 513.88 / FGSC A1513).